The chain runs to 183 residues: Nodulation protein L (183 aa).

The protein belongs to the transferase hexapeptide repeat family.

Its function is as follows. Acetyltransferase implicated in the O-acetylation of Nod factors. The polypeptide is Nodulation protein L (nodL) (Rhizobium meliloti (strain 1021) (Ensifer meliloti)).